The chain runs to 443 residues: MSEMTPREIVSELDKHIIGQDNAKRSVAIALRNRWRRMQLNEELRHEVTPKNILMIGPTGVGKTEIARRLAKLANAPFIKVEATKFTEVGYVGKEVDSIIRDLTDAAVKMVRVQAIEKNRYRAEELAEERILDVLIPPAKNNWGQTEQQQEPSAARQAFRKKLREGQLDDKEIEIDLAAAPMGVEIMAPPGMEEMTSQLQSMFQNLGGQKQKARKLKIKDAMKLLIEEEAAKLVNPEELKQDAIDAVEQHGIVFIDEIDKICKRGESSGPDVSREGVQRDLLPLVEGCTVSTKHGMVKTDHILFIASGAFQIAKPSDLIPELQGRLPIRVELQALTTSDFERILTEPNASITVQYKALMATEGVNIEFTDSGIKRIAEAAWQVNESTENIGARRLHTVLERLMEEISYDASDLSGQTITIDADYVSKHLDALVADEDLSRFIL.

ATP contacts are provided by residues isoleucine 18, 60–65, aspartate 256, glutamate 321, and arginine 393; that span reads GVGKTE.

It belongs to the ClpX chaperone family. HslU subfamily. As to quaternary structure, a double ring-shaped homohexamer of HslV is capped on each side by a ring-shaped HslU homohexamer. The assembly of the HslU/HslV complex is dependent on binding of ATP.

Its subcellular location is the cytoplasm. In terms of biological role, ATPase subunit of a proteasome-like degradation complex; this subunit has chaperone activity. The binding of ATP and its subsequent hydrolysis by HslU are essential for unfolding of protein substrates subsequently hydrolyzed by HslV. HslU recognizes the N-terminal part of its protein substrates and unfolds these before they are guided to HslV for hydrolysis. The sequence is that of ATP-dependent protease ATPase subunit HslU from Escherichia coli O17:K52:H18 (strain UMN026 / ExPEC).